The sequence spans 337 residues: Protein FAM76B (337 aa).

Residues 143–241 form a disordered region; it reads EQRKSLGSTH…INQSTDSGGT (99 aa). Residues 147–159 are compositionally biased toward low complexity; it reads SLGSTHSNSSSSS. Over residues 166-187 the composition is skewed to basic residues; sequence HHSKHHHHHHHHHRHSSSHHKI. Basic and acidic residues predominate over residues 213–222; sequence TPKKKPKLEF. Residues 226-241 are compositionally biased toward polar residues; it reads NGDSSSINQSTDSGGT. The stretch at 301-326 forms a coiled coil; it reads KDFVEQLQGKNRELLKQVAALSKGKK.

It belongs to the FAM76 family.

In terms of biological role, plays a role in hematopoiesis and immune system development, and participates in the inflammatory response. The protein is Protein FAM76B (fam76b) of Xenopus laevis (African clawed frog).